The following is a 153-amino-acid chain: Agglutinin (153 aa).

Beta-D-galactosyl-(1-&gt;3)-N-acetyl-D-galactosamine-binding positions include 22–25 (NAWE) and N46. Residues 58–153 (GDSAEYLIIN…DNQKWYFDAK (96 aa)) form the Ricin B-type lectin domain.

Homodimer.

Its function is as follows. Lectin that primarily recognizes glycans with a non-reducing terminal N-acetylgalactosamine (GalNAc), with a preference for the alpha- over the beta-anomer. Can also bind non-reducing terminal galactose (Gal) residues but with a lower affinity. Strongly interacts with glycolipid type glycans with terminal non-reducing Gal or GalNAc but fails to bind sialylated or fucosylated forms of the same glycans. Strongly interacts with galactosylated N-glycans, displaying highest affinity for alpha-1-3 branched mono-antennary N-glycans but also binding to multi-antennary glycans. The protein is Agglutinin of Sclerotinia sclerotiorum (strain ATCC 18683 / 1980 / Ss-1) (White mold).